The sequence spans 426 residues: Peptidoglycan DD-endopeptidase ShyB (426 aa).

The signal sequence occupies residues 1–21; sequence MGQFRFLALIVAVLCFSVALF. Polar residues predominate over residues 32–48; sequence SYSVPLNQSVNTSQPPS. The interval 32–55 is disordered; that stretch reads SYSVPLNQSVNTSQPPSSEMVPSD. Positions 291, 295, and 372 each coordinate Zn(2+).

It belongs to the peptidase M23B family. As to quaternary structure, monomer. It depends on Zn(2+) as a cofactor.

It localises to the periplasm. It participates in cell wall degradation; peptidoglycan degradation. With respect to regulation, not inhibited by metal chelator EDTA. Functionally, cell wall peptidoglycan (PG) DD-endopeptidase, which may act as a substitute for other zinc-dependent PG endopeptidases (ShyA and ShyC) during zinc starvation. Hydrolyzes peptide cross-links which covalently connect adjacent PG strands probably to allow insertion of new glycans and thus cell wall expansion. Degrades purified whole PG sacculi in vitro. It is unclear how it is able to function in low zinc environments, but that may possibly be due to binding zinc with very high affinity, utilizing an alternative metal cofactor or that it may function independently of a bound metal cofactor. The polypeptide is Peptidoglycan DD-endopeptidase ShyB (Vibrio cholerae serotype O1 (strain ATCC 39315 / El Tor Inaba N16961)).